Here is a 218-residue protein sequence, read N- to C-terminus: Thiopurine S-methyltransferase (218 aa).

Residues tryptophan 10, leucine 45, glutamate 66, and arginine 123 each contribute to the S-adenosyl-L-methionine site.

It belongs to the class I-like SAM-binding methyltransferase superfamily. TPMT family.

Its subcellular location is the cytoplasm. The catalysed reaction is S-adenosyl-L-methionine + a thiopurine = S-adenosyl-L-homocysteine + a thiopurine S-methylether.. The protein is Thiopurine S-methyltransferase of Shewanella sp. (strain MR-4).